Reading from the N-terminus, the 332-residue chain is Fructose-1,6-bisphosphatase class 1 (332 aa).

Mg(2+)-binding residues include Glu93, Asp113, Leu115, and Asp116. Residues 116-119 (DGSS), Asn209, Tyr235, and Lys272 each bind substrate. Glu278 lines the Mg(2+) pocket.

This sequence belongs to the FBPase class 1 family. Homotetramer. It depends on Mg(2+) as a cofactor.

It is found in the cytoplasm. It carries out the reaction beta-D-fructose 1,6-bisphosphate + H2O = beta-D-fructose 6-phosphate + phosphate. It functions in the pathway carbohydrate biosynthesis; gluconeogenesis. In Syntrophus aciditrophicus (strain SB), this protein is Fructose-1,6-bisphosphatase class 1.